A 308-amino-acid polypeptide reads, in one-letter code: MPIKIPDTLPAFEALQNEGVRVMTETMAIRQDIRPLQIGLLNLMPNKIKTEVQMARLVGASPLQVEFSLVRVGGHKAKNTSEEHLLSFYQTWEEVKHRKFDGFIITGAPIELLEYEDVTYWDEMKQILDWTTTNVHSTLNVCWGAMAAIYHFHGVPKYTLKEKAFGVYRHQNLKPSSVYLNGFSDDFAVPVSRWTEVRRADIEKVPNLEILMESSEMGVCLVHEQACNRLYMFNHVEYDSTSLADEYFRDVHAGVPIKMPHNYFPHNDPEIPPQNRWRSHAHLFFGNWINELYQTTPYDLEDIGEERL.

The active-site Acyl-thioester intermediate is the C142. Residues K163 and S192 each coordinate substrate. Residue H235 is the Proton acceptor of the active site. E237 is a catalytic residue. R249 serves as a coordination point for substrate.

This sequence belongs to the MetA family.

The protein resides in the cytoplasm. The enzyme catalyses L-homoserine + acetyl-CoA = O-acetyl-L-homoserine + CoA. The protein operates within amino-acid biosynthesis; L-methionine biosynthesis via de novo pathway; O-acetyl-L-homoserine from L-homoserine: step 1/1. Functionally, transfers an acetyl group from acetyl-CoA to L-homoserine, forming acetyl-L-homoserine. This Rhizobium rhizogenes (strain K84 / ATCC BAA-868) (Agrobacterium radiobacter) protein is Homoserine O-acetyltransferase.